A 93-amino-acid polypeptide reads, in one-letter code: Uteroglobin (93 aa).

The first 17 residues, 1-17 (MKLAITIILVMLSVCYS), serve as a signal peptide directing secretion.

This sequence belongs to the secretoglobin family. As to quaternary structure, antiparallel homodimer; disulfide-linked. Interaction with LMBR1L is controversial.

Its subcellular location is the secreted. Functionally, binds phosphatidylcholine, phosphatidylinositol, polychlorinated biphenyls (PCB) and weakly progesterone, potent inhibitor of phospholipase A2. In Neotomodon alstoni (Mexican volcano mouse), this protein is Uteroglobin (SCGB1A1).